The following is a 741-amino-acid chain: NAD(P)H-quinone oxidoreductase subunit 5, chloroplastic (741 aa).

14 helical membrane-spanning segments follow: residues 9 to 29, 40 to 60, 89 to 109, 122 to 139, 147 to 167, 185 to 205, 219 to 239, 258 to 278, 280 to 300, 396 to 416, 425 to 445, 544 to 564, 603 to 623, and 719 to 739; these read WIIP…LLLV, WAFP…DLSI, IDPL…MVLI, LRFF…LGLV, IHIF…FWFT, GDFG…SLEF, NGVN…GAVA, TPIS…FLVA, LLPI…LGII, TTFL…CFWS, WLYS…TAFY, LFPL…GIPF, IYSV…YGSV, and YLFV…FYFL.

The protein belongs to the complex I subunit 5 family. As to quaternary structure, NDH is composed of at least 16 different subunits, 5 of which are encoded in the nucleus.

The protein localises to the plastid. It is found in the chloroplast thylakoid membrane. It carries out the reaction a plastoquinone + NADH + (n+1) H(+)(in) = a plastoquinol + NAD(+) + n H(+)(out). The catalysed reaction is a plastoquinone + NADPH + (n+1) H(+)(in) = a plastoquinol + NADP(+) + n H(+)(out). Functionally, NDH shuttles electrons from NAD(P)H:plastoquinone, via FMN and iron-sulfur (Fe-S) centers, to quinones in the photosynthetic chain and possibly in a chloroplast respiratory chain. The immediate electron acceptor for the enzyme in this species is believed to be plastoquinone. Couples the redox reaction to proton translocation, and thus conserves the redox energy in a proton gradient. This Liriodendron tulipifera (Tuliptree) protein is NAD(P)H-quinone oxidoreductase subunit 5, chloroplastic (ndhF).